Consider the following 401-residue polypeptide: Chorismate synthase (401 aa).

Positions 40 and 46 each coordinate NADP(+). FMN contacts are provided by residues 135–137 (RAS), 256–257 (QA), G300, 315–319 (KPIST), and R341.

It belongs to the chorismate synthase family. Homotetramer. FMNH2 is required as a cofactor.

It catalyses the reaction 5-O-(1-carboxyvinyl)-3-phosphoshikimate = chorismate + phosphate. Its pathway is metabolic intermediate biosynthesis; chorismate biosynthesis; chorismate from D-erythrose 4-phosphate and phosphoenolpyruvate: step 7/7. Its function is as follows. Catalyzes the anti-1,4-elimination of the C-3 phosphate and the C-6 proR hydrogen from 5-enolpyruvylshikimate-3-phosphate (EPSP) to yield chorismate, which is the branch point compound that serves as the starting substrate for the three terminal pathways of aromatic amino acid biosynthesis. This reaction introduces a second double bond into the aromatic ring system. The chain is Chorismate synthase from Mycobacterium bovis (strain BCG / Pasteur 1173P2).